A 294-amino-acid polypeptide reads, in one-letter code: 4-hydroxy-tetrahydrodipicolinate synthase (294 aa).

Thr-45 lines the pyruvate pocket. Residue Tyr-133 is the Proton donor/acceptor of the active site. Residue Lys-161 is the Schiff-base intermediate with substrate of the active site. Ile-203 contacts pyruvate.

This sequence belongs to the DapA family. In terms of assembly, homotetramer; dimer of dimers.

The protein resides in the cytoplasm. The enzyme catalyses L-aspartate 4-semialdehyde + pyruvate = (2S,4S)-4-hydroxy-2,3,4,5-tetrahydrodipicolinate + H2O + H(+). It functions in the pathway amino-acid biosynthesis; L-lysine biosynthesis via DAP pathway; (S)-tetrahydrodipicolinate from L-aspartate: step 3/4. Its function is as follows. Catalyzes the condensation of (S)-aspartate-beta-semialdehyde [(S)-ASA] and pyruvate to 4-hydroxy-tetrahydrodipicolinate (HTPA). The sequence is that of 4-hydroxy-tetrahydrodipicolinate synthase from Shewanella sp. (strain ANA-3).